The following is a 258-amino-acid chain: Global transcriptional regulator CodY (258 aa).

The segment at 1 to 156 (MSSLLDKTRM…SATIIGLEIL (156 aa)) is GAF domain. Residues 204 to 223 (ASKIADKVGITRSVIVNALR) constitute a DNA-binding region (H-T-H motif).

It belongs to the CodY family.

Its subcellular location is the cytoplasm. DNA-binding global transcriptional regulator which is involved in the adaptive response to starvation and acts by directly or indirectly controlling the expression of numerous genes in response to nutrient availability. During rapid exponential growth, CodY is highly active and represses genes whose products allow adaptation to nutrient depletion. The polypeptide is Global transcriptional regulator CodY (Clostridium botulinum (strain ATCC 19397 / Type A)).